The chain runs to 362 residues: Peptide chain release factor 1 (362 aa).

The residue at position 237 (Q237) is an N5-methylglutamine.

This sequence belongs to the prokaryotic/mitochondrial release factor family. In terms of processing, methylated by PrmC. Methylation increases the termination efficiency of RF1.

The protein localises to the cytoplasm. In terms of biological role, peptide chain release factor 1 directs the termination of translation in response to the peptide chain termination codons UAG and UAA. The polypeptide is Peptide chain release factor 1 (Legionella pneumophila (strain Corby)).